The primary structure comprises 147 residues: UPF0306 protein YPK_3704 (147 aa).

Belongs to the UPF0306 family.

In Yersinia pseudotuberculosis serotype O:3 (strain YPIII), this protein is UPF0306 protein YPK_3704.